The following is a 177-amino-acid chain: Protein GrpE (177 aa).

A disordered region spans residues 1-26; that stretch reads MSEEIKKDDLQEEVEATETEETVEEV. Residues 10 to 26 are compositionally biased toward acidic residues; sequence LQEEVEATETEETVEEV.

It belongs to the GrpE family. As to quaternary structure, homodimer.

Its subcellular location is the cytoplasm. Its function is as follows. Participates actively in the response to hyperosmotic and heat shock by preventing the aggregation of stress-denatured proteins, in association with DnaK and GrpE. It is the nucleotide exchange factor for DnaK and may function as a thermosensor. Unfolded proteins bind initially to DnaJ; upon interaction with the DnaJ-bound protein, DnaK hydrolyzes its bound ATP, resulting in the formation of a stable complex. GrpE releases ADP from DnaK; ATP binding to DnaK triggers the release of the substrate protein, thus completing the reaction cycle. Several rounds of ATP-dependent interactions between DnaJ, DnaK and GrpE are required for fully efficient folding. This chain is Protein GrpE, found in Streptococcus agalactiae serotype Ia (strain ATCC 27591 / A909 / CDC SS700).